A 298-amino-acid chain; its full sequence is Protease HtpX homolog (298 aa).

Transmembrane regions (helical) follow at residues 5-25 (IFLF…VLSV) and 45-65 (MALL…SLAI). H155 is a binding site for Zn(2+). E156 is a catalytic residue. A Zn(2+)-binding site is contributed by H159. 2 helical membrane passes run 170 to 190 (LLQG…AWIA) and 204 to 224 (FIAM…VVFA). E230 is a Zn(2+) binding site.

The protein belongs to the peptidase M48B family. Zn(2+) serves as cofactor.

Its subcellular location is the cell membrane. The protein is Protease HtpX homolog of Bacillus subtilis (strain 168).